The sequence spans 426 residues: Protein EARLY STARVATION 1, chloroplastic (426 aa).

Residues 1 to 58 (MSEMAASSAISLLDIKLRRFGVGASNHELRLTKWFKGDQAGAPTRRFTCFADMLAPIR) constitute a chloroplast transit peptide. Disordered stretches follow at residues 106–127 (CTPR…TGIA) and 396–426 (QPRE…DQPQ). The segment covering 118–127 (TPPKRDTGIA) has biased composition (basic and acidic residues). A compositionally biased stretch (pro residues) spans 412–426 (PSPPPEPDLPPDQPQ).

The protein belongs to the ESV1 family.

The protein localises to the plastid. It is found in the chloroplast stroma. Its subcellular location is the plastid stroma. Its function is as follows. Binds preferentially to highly ordered alpha-glucans, such as starch and crystalline maltodextrins. Involved in the organization of the starch granule matrix, thus influencing starch turnover by modulating the accessibility of starch polymers to modifying and degrading enzymes involved in phosphorylation, hydrolyzes and synthesis, including starch synthases (SSI and SSIII), starch phosphorylases (PHS1), isoamylase, beta-amylase, glucan water dikinase (GWD) and phosphoglucan water dikinase (PWD). Prevents GWD- and PWD-mediated starch phosphorylation, and subsequent degradation. Required for the control of starch degradation in leaves and starch distribution in nonphotosynthetic parts (e.g. cells immediately adjacent to veins, columella cells of root caps, stems, flowers and siliques) by limiting the hasty depletion of starch reserves during the night. Promotes gravitropic responses, negative in shoots but positive in roots, by maintaining starch granules (statoliths) accumulation in hypocotyls and roots columella, especially in dark conditions and in the endodermis, where starch is formed from transported glucose-6-phosphates. This chain is Protein EARLY STARVATION 1, chloroplastic, found in Arabidopsis thaliana (Mouse-ear cress).